Reading from the N-terminus, the 552-residue chain is E3 ubiquitin-protein ligase MGRN1 (552 aa).

G2 carries N-myristoyl glycine lipidation. The RING-type zinc finger occupies 278-317 (CVVCLSDLRDTLILPCRHLCLCTSCADTLRYQANNCPICR). Residues 355-384 (SCPFKKSKPHPASLASKKPKRETNSDSVPP) are disordered. Residues 406–409 (PSAP) carry the Required for TSG101-binding motif. Y411 is modified (phosphotyrosine). The disordered stretch occupies residues 439 to 552 (SSRQKGRPQS…PDSCSVGIDE (114 aa)). Polar residues predominate over residues 450–460 (APDSTLRSPSS). Over residues 464–475 (EEDEEKLSEDVD) the composition is skewed to acidic residues. Position 471 is a phosphoserine (S471). A compositionally biased stretch (polar residues) spans 504-523 (SSSPQQGTRAASIENVLQDS). S524 bears the Phosphoserine mark.

In terms of assembly, interacts with MC1R and MC4R, but not with TBXA2R. Interacts with TSG101. Interacts with mislocalized cytosolically exposed PRNP; this interaction alters MGRN1 subcellular location and causes lysosomal enlargement. In terms of processing, autoubiquitinated in vitro.

It localises to the early endosome. The protein resides in the cytoplasm. The protein localises to the cytosol. It is found in the nucleus. Its subcellular location is the cell membrane. The catalysed reaction is S-ubiquitinyl-[E2 ubiquitin-conjugating enzyme]-L-cysteine + [acceptor protein]-L-lysine = [E2 ubiquitin-conjugating enzyme]-L-cysteine + N(6)-ubiquitinyl-[acceptor protein]-L-lysine.. The protein operates within protein modification; protein ubiquitination. E3 ubiquitin-protein ligase. Mediates monoubiquitination at multiple sites of TSG101 in the presence of UBE2D1, but not of UBE2G1, nor UBE2H. Plays a role in the regulation of endosome-to-lysosome trafficking. Impairs MC1R- and MC4R-signaling by competing with GNAS-binding to MCRs and inhibiting agonist-induced cAMP production. Does not inhibit ADRB2-signaling. Does not promote MC1R ubiquitination. Acts also as a negative regulator of hedgehog signaling. The sequence is that of E3 ubiquitin-protein ligase MGRN1 (MGRN1) from Homo sapiens (Human).